A 4367-amino-acid polypeptide reads, in one-letter code: Dynein heavy chain, cytoplasmic (4367 aa).

Residues M1 to S13 are compositionally biased toward pro residues. Residues M1–A20 form a disordered region. Residues M1–N1904 form a stem region. Coiled-coil stretches lie at residues A676–V693, I1176–R1215, L1327–L1351, Y1557–V1574, and N1637–V1668. AAA regions lie at residues Y1905–S2130, E2202–A2460, E2566–G2815, and T2909–I3179. Residue G1943–T1950 coordinates ATP. Positions A2195–I2218 form a coiled coil. ATP is bound by residues G2240–S2247, G2605–T2612, and G2947–T2954. Coiled-coil stretches lie at residues Q3193 to A3296, P3423 to Q3481, and V3778 to I3809. Residues Q3193 to Q3481 form a stalk region. 2 AAA regions span residues L3565–A3794 and A4003–T4215.

It belongs to the dynein heavy chain family. Consists of at least two heavy chains and a number of intermediate and light chains.

It is found in the cytoplasm. The protein localises to the cytoskeleton. Functionally, cytoplasmic dynein acts as a motor for the intracellular retrograde motility of vesicles and organelles along microtubules. Dynein has ATPase activity; the force-producing power stroke is thought to occur on release of ADP. Required to maintain uniform nuclear distribution in hyphae. The chain is Dynein heavy chain, cytoplasmic (ro-1) from Neurospora crassa (strain ATCC 24698 / 74-OR23-1A / CBS 708.71 / DSM 1257 / FGSC 987).